We begin with the raw amino-acid sequence, 362 residues long: uncharacterized protein (362 aa).

Ala2 is subject to N-acetylalanine.

It belongs to the Gfo/Idh/MocA family. Homodimer.

This is an uncharacterized protein from Arabidopsis thaliana (Mouse-ear cress).